We begin with the raw amino-acid sequence, 213 residues long: Retinitis pigmentosa 9 protein homolog (213 aa).

Residues 1–61 (MSSGAGSRRP…IKEDETKPED (61 aa)) form a disordered region. The PIM1-binding stretch occupies residues 1-147 (MSSGAGSRRP…RENKRHEKDV (147 aa)). 2 stretches are compositionally biased toward basic and acidic residues: residues 9-21 (RPRE…LQRR) and 52-61 (IKEDETKPED). Residues 96 to 114 (QCWRCKRYGHRTGDKECPF) form a CCHC-type zinc finger. Residue Lys121 forms a Glycyl lysine isopeptide (Lys-Gly) (interchain with G-Cter in SUMO2) linkage. Residues 154 to 213 (QLLEDSTSDDDGSSSSSSGDREKRKKRKKKEKHKKRKKEKKKKKKRKHKASKSSESSDSE) are disordered. The span at 176 to 204 (KRKKRKKKEKHKKRKKEKKKKKKRKHKAS) shows a compositional bias: basic residues. Residues Ser204 and Ser206 each carry the phosphoserine; by PIM1; in vitro modification.

Binds to PIM1. Binds to ZNHIT4. Highly expressed in the testis, moderately in the kidney, liver and spleen, and weakly in the skeletal muscle and heart.

The protein resides in the nucleus. Is thought to be a target protein for the PIM1 kinase. May play some roles in B-cell proliferation in association with PIM1. This is Retinitis pigmentosa 9 protein homolog (rp9) from Mus musculus (Mouse).